We begin with the raw amino-acid sequence, 263 residues long: Neuferricin (263 aa).

Positions 1-22 (MLRICGLGVVLSLAVAAVAVMA) are cleaved as a signal peptide. The 100-residue stretch at 35–134 (IRLFLPEELA…KNYVFVGRLV (100 aa)) folds into the Cytochrome b5 heme-binding domain. The interval 220–249 (VRTTGPPSDQQDNPRHSNHGDLDNPNLEEY) is disordered. The span at 231-241 (DNPRHSNHGDL) shows a compositional bias: basic and acidic residues.

The protein belongs to the cytochrome b5 family. MAPR subfamily. In terms of tissue distribution, expressed in various tissues including brain, heart, adrenal gland, and kidney. In the brain, mainly expressed in pyramidal cells around the CA3 region of Ammon horn in hippocampus. Present in brain (at protein level).

It is found in the secreted. Its function is as follows. Heme-binding protein which promotes neuronal but not astrocyte differentiation. The sequence is that of Neuferricin from Mus musculus (Mouse).